We begin with the raw amino-acid sequence, 470 residues long: Shutoff alkaline exonuclease (470 aa).

It belongs to the herpesviridae alkaline nuclease family. In terms of assembly, forms a complex with the DNA polymerase, the DNA polymerase processivity factor, and the major DNA binding protein.

Its subcellular location is the host nucleus. The protein localises to the host cytoplasm. Plays a role in processing non linear or branched viral DNA intermediates in order to promote the production of mature packaged unit-length linear progeny viral DNA molecules. Exhibits endonuclease and exonuclease activities and accepts both double-stranded and single-stranded DNA as substrate. Exonuclease digestion of DNA is in the 5'-&gt; 3' direction and the products are 5'-monophosphate nucleosides. Additionally, forms a recombinase with the major DNA-binding protein, which displays strand exchange activity. Also acts as a cytoplasmic RNA endonuclease that induces degradation of the majority of the cellular messenger RNAs during early lytic infection. The resulting inhibition of cellular protein synthesis serves to ensure maximal viral gene expression and evasion from host immune response. Internally cleaves host mRNAs which are then degraded by the cellular exonuclease XRN1. Bypasses therefore the regulatory steps of deadenylation and decapping normally required for XRN1 activation. This is Shutoff alkaline exonuclease from Epstein-Barr virus (strain GD1) (HHV-4).